The sequence spans 54 residues: IATVDCSDYPKPACSLDYMPLCGSDSKTYSNKCNFCNAVVDSNGTLTLSHFEKC.

A Kazal-like domain is found at 4-54; sequence VDCSDYPKPACSLDYMPLCGSDSKTYSNKCNFCNAVVDSNGTLTLSHFEKC. Disulfide bonds link cysteine 6/cysteine 36, cysteine 14/cysteine 33, and cysteine 22/cysteine 54. Asparagine 43 is a glycosylation site (N-linked (GlcNAc...) asparagine).

The protein resides in the secreted. The chain is Ovomucoid from Chroicocephalus ridibundus (Black-headed gull).